The sequence spans 355 residues: Protein FIP1 (355 aa).

4 helical membrane passes run 42 to 62 (YLYM…PWMF), 72 to 92 (LLCC…QYFV), 113 to 133 (VVRL…LVIV), and 149 to 169 (IIML…IGYV). Residues 220–337 (LHFLSEEILC…RMSNSELQKE (118 aa)) adopt a coiled-coil conformation. Residues 331-340 (NSELQKEVAS) show a composition bias toward basic and acidic residues. The segment at 331–355 (NSELQKEVASTRRKQMLETTTSEQP) is disordered.

It belongs to the TMEM192 family. As to quaternary structure, interacts with FRI.

It is found in the membrane. This chain is Protein FIP1, found in Arabidopsis thaliana (Mouse-ear cress).